Here is a 436-residue protein sequence, read N- to C-terminus: 3-ketoacyl-CoA thiolase (436 aa).

C99 functions as the Acyl-thioester intermediate in the catalytic mechanism. Residues H392 and C422 each act as proton acceptor in the active site.

It belongs to the thiolase-like superfamily. Thiolase family. As to quaternary structure, heterotetramer of two alpha chains (FadJ) and two beta chains (FadI).

The protein localises to the cytoplasm. It carries out the reaction an acyl-CoA + acetyl-CoA = a 3-oxoacyl-CoA + CoA. Its pathway is lipid metabolism; fatty acid beta-oxidation. In terms of biological role, catalyzes the final step of fatty acid oxidation in which acetyl-CoA is released and the CoA ester of a fatty acid two carbons shorter is formed. This Salmonella typhimurium (strain LT2 / SGSC1412 / ATCC 700720) protein is 3-ketoacyl-CoA thiolase.